We begin with the raw amino-acid sequence, 543 residues long: T-complex protein 1 subunit eta (543 aa).

Position 1 is an N-acetylmethionine (Met1). Residue Gly41 participates in ADP binding. Gly41 provides a ligand contact to ATP. Lys67 carries the N6-acetyllysine modification. Asp92 serves as a coordination point for Mg(2+). The ADP site is built by Gly93, Thr94, Thr95, Ser96, Ser164, and Ser165. Gly93 is a binding site for ATP. An ATP-binding site is contributed by Ser96. N6-acetyllysine occurs at positions 250 and 320. ATP is bound by residues Arg398 and Gly409. Gly409 provides a ligand contact to ADP. Lys430 participates in a covalent cross-link: Glycyl lysine isopeptide (Lys-Gly) (interchain with G-Cter in SUMO2). ADP is bound by residues Glu494 and Arg499. Arg499 contacts ATP. Residues Arg524–His543 form a disordered region. Arg535 carries the post-translational modification Omega-N-methylarginine.

This sequence belongs to the TCP-1 chaperonin family. As to quaternary structure, component of the chaperonin-containing T-complex (TRiC), a hexadecamer composed of two identical back-to-back stacked rings enclosing a protein folding chamber. Each ring is made up of eight different subunits: TCP1/CCT1, CCT2, CCT3, CCT4, CCT5, CCT6A/CCT6, CCT7, CCT8. Interacts with PACRG. Interacts with DLEC1.

The protein resides in the cytoplasm. The enzyme catalyses ATP + H2O = ADP + phosphate + H(+). Component of the chaperonin-containing T-complex (TRiC), a molecular chaperone complex that assists the folding of actin, tubulin and other proteins upon ATP hydrolysis. The TRiC complex mediates the folding of WRAP53/TCAB1, thereby regulating telomere maintenance. This is T-complex protein 1 subunit eta (CCT7) from Bos taurus (Bovine).